The sequence spans 297 residues: 4-hydroxy-tetrahydrodipicolinate synthase (297 aa).

Residue T51 participates in pyruvate binding. Residue Y139 is the Proton donor/acceptor of the active site. K167 functions as the Schiff-base intermediate with substrate in the catalytic mechanism. V209 lines the pyruvate pocket.

Belongs to the DapA family. In terms of assembly, homotetramer; dimer of dimers.

It is found in the cytoplasm. It carries out the reaction L-aspartate 4-semialdehyde + pyruvate = (2S,4S)-4-hydroxy-2,3,4,5-tetrahydrodipicolinate + H2O + H(+). The protein operates within amino-acid biosynthesis; L-lysine biosynthesis via DAP pathway; (S)-tetrahydrodipicolinate from L-aspartate: step 3/4. Functionally, catalyzes the condensation of (S)-aspartate-beta-semialdehyde [(S)-ASA] and pyruvate to 4-hydroxy-tetrahydrodipicolinate (HTPA). This chain is 4-hydroxy-tetrahydrodipicolinate synthase, found in Albidiferax ferrireducens (strain ATCC BAA-621 / DSM 15236 / T118) (Rhodoferax ferrireducens).